The sequence spans 440 residues: Thymidine phosphorylase (440 aa).

Belongs to the thymidine/pyrimidine-nucleoside phosphorylase family. In terms of assembly, homodimer.

It catalyses the reaction thymidine + phosphate = 2-deoxy-alpha-D-ribose 1-phosphate + thymine. The protein operates within pyrimidine metabolism; dTMP biosynthesis via salvage pathway; dTMP from thymine: step 1/2. The enzymes which catalyze the reversible phosphorolysis of pyrimidine nucleosides are involved in the degradation of these compounds and in their utilization as carbon and energy sources, or in the rescue of pyrimidine bases for nucleotide synthesis. This chain is Thymidine phosphorylase, found in Escherichia coli (strain 55989 / EAEC).